The sequence spans 177 residues: Dual-action ribosomal maturation protein DarP (177 aa).

This sequence belongs to the DarP family.

It localises to the cytoplasm. Functionally, member of a network of 50S ribosomal subunit biogenesis factors which assembles along the 30S-50S interface, preventing incorrect 23S rRNA structures from forming. Promotes peptidyl transferase center (PTC) maturation. In Histophilus somni (strain 2336) (Haemophilus somnus), this protein is Dual-action ribosomal maturation protein DarP.